The chain runs to 453 residues: Kynureninase (453 aa).

Residues leucine 114, threonine 115, 142 to 145, aspartate 232, histidine 235, and tyrosine 257 contribute to the pyridoxal 5'-phosphate site; that span reads FPSD. The residue at position 258 (lysine 258) is an N6-(pyridoxal phosphate)lysine. Tryptophan 286 contributes to the pyridoxal 5'-phosphate binding site.

Belongs to the kynureninase family. In terms of assembly, homodimer. Pyridoxal 5'-phosphate is required as a cofactor.

Its subcellular location is the cytoplasm. It carries out the reaction L-kynurenine + H2O = anthranilate + L-alanine + H(+). It catalyses the reaction 3-hydroxy-L-kynurenine + H2O = 3-hydroxyanthranilate + L-alanine + H(+). The protein operates within amino-acid degradation; L-kynurenine degradation; L-alanine and anthranilate from L-kynurenine: step 1/1. Its pathway is cofactor biosynthesis; NAD(+) biosynthesis; quinolinate from L-kynurenine: step 2/3. Catalyzes the cleavage of L-kynurenine (L-Kyn) and L-3-hydroxykynurenine (L-3OHKyn) into anthranilic acid (AA) and 3-hydroxyanthranilic acid (3-OHAA), respectively. The polypeptide is Kynureninase (Cryptococcus neoformans var. neoformans serotype D (strain B-3501A) (Filobasidiella neoformans)).